The chain runs to 300 residues: Probable L-serine dehydratase, alpha chain (300 aa).

This sequence belongs to the iron-sulfur dependent L-serine dehydratase family. Heterodimer of an alpha chain and a beta chain. [4Fe-4S] cluster is required as a cofactor.

The catalysed reaction is L-serine = pyruvate + NH4(+). Its pathway is carbohydrate biosynthesis; gluconeogenesis. In Bacillus subtilis (strain 168), this protein is Probable L-serine dehydratase, alpha chain (sdaAA).